The primary structure comprises 148 residues: 3-dehydroquinate dehydratase (148 aa).

The active-site Proton acceptor is the Tyr23. Substrate-binding residues include Asn75, His81, and Asp88. His101 functions as the Proton donor in the catalytic mechanism. Substrate is bound by residues 102–103 (LS) and Arg112.

Belongs to the type-II 3-dehydroquinase family. In terms of assembly, homododecamer.

It catalyses the reaction 3-dehydroquinate = 3-dehydroshikimate + H2O. Its pathway is metabolic intermediate biosynthesis; chorismate biosynthesis; chorismate from D-erythrose 4-phosphate and phosphoenolpyruvate: step 3/7. Its function is as follows. Catalyzes a trans-dehydration via an enolate intermediate. The polypeptide is 3-dehydroquinate dehydratase (Xanthomonas oryzae pv. oryzae (strain MAFF 311018)).